A 962-amino-acid polypeptide reads, in one-letter code: Glycine dehydrogenase (decarboxylating) (962 aa).

Lysine 709 is subject to N6-(pyridoxal phosphate)lysine.

The protein belongs to the GcvP family. The glycine cleavage system is composed of four proteins: P, T, L and H. Pyridoxal 5'-phosphate is required as a cofactor.

The catalysed reaction is N(6)-[(R)-lipoyl]-L-lysyl-[glycine-cleavage complex H protein] + glycine + H(+) = N(6)-[(R)-S(8)-aminomethyldihydrolipoyl]-L-lysyl-[glycine-cleavage complex H protein] + CO2. Functionally, the glycine cleavage system catalyzes the degradation of glycine. The P protein binds the alpha-amino group of glycine through its pyridoxal phosphate cofactor; CO(2) is released and the remaining methylamine moiety is then transferred to the lipoamide cofactor of the H protein. This chain is Glycine dehydrogenase (decarboxylating), found in Shewanella amazonensis (strain ATCC BAA-1098 / SB2B).